Consider the following 484-residue polypeptide: Chromosomal replication initiator protein DnaA (484 aa).

Residues 1–73 (MQEGKNIWSL…EILIEKGHST (73 aa)) form a domain I, interacts with DnaA modulators region. Residues 73–140 (TINVEFIHSQ…EEIHIKYRNP (68 aa)) are domain II. Residues 141–357 (FLKKKYTFEN…AAVTKLKAHI (217 aa)) form a domain III, AAA+ region region. ATP contacts are provided by glycine 185, glycine 187, lysine 188, and threonine 189. Positions 358–484 (DLEDIEIDTN…IELMNKINKN (127 aa)) are domain IV, binds dsDNA.

The protein belongs to the DnaA family. Oligomerizes as a right-handed, spiral filament on DNA at oriC.

Its subcellular location is the cytoplasm. In terms of biological role, plays an essential role in the initiation and regulation of chromosomal replication. ATP-DnaA binds to the origin of replication (oriC) to initiate formation of the DNA replication initiation complex once per cell cycle. Binds the DnaA box (a 9 base pair repeat at the origin) and separates the double-stranded (ds)DNA. Forms a right-handed helical filament on oriC DNA; dsDNA binds to the exterior of the filament while single-stranded (ss)DNA is stabiized in the filament's interior. The ATP-DnaA-oriC complex binds and stabilizes one strand of the AT-rich DNA unwinding element (DUE), permitting loading of DNA polymerase. After initiation quickly degrades to an ADP-DnaA complex that is not apt for DNA replication. Binds acidic phospholipids. In Borrelia recurrentis (strain A1), this protein is Chromosomal replication initiator protein DnaA.